The primary structure comprises 286 residues: Aminoglycoside N(3)-acetyltransferase III (286 aa).

Belongs to the antibiotic N-acetyltransferase family.

It carries out the reaction a 2-deoxystreptamine antibiotic + acetyl-CoA = an N(3)-acetyl-2-deoxystreptamine antibiotic + CoA + H(+). Its function is as follows. Resistance to antibiotics containing the 2-deoxy-streptamine ring including gentamicin, kanamycin, tobramycin, neomycin and apramycin. The protein is Aminoglycoside N(3)-acetyltransferase III (aacC2) of Acinetobacter baumannii.